Consider the following 325-residue polypeptide: Pyruvate dehydrogenase E1 component subunit beta (325 aa).

E60 contributes to the thiamine diphosphate binding site.

In terms of assembly, heterodimer of an alpha and a beta chain. Thiamine diphosphate serves as cofactor.

Its subcellular location is the cytoplasm. It localises to the secreted. It catalyses the reaction N(6)-[(R)-lipoyl]-L-lysyl-[protein] + pyruvate + H(+) = N(6)-[(R)-S(8)-acetyldihydrolipoyl]-L-lysyl-[protein] + CO2. Activity of the E1 module is inhibited by the pyruvate dehydrogenase inhibitor PdhI. Functionally, the pyruvate dehydrogenase complex catalyzes the overall conversion of pyruvate to acetyl-CoA and CO(2). It contains multiple copies of three enzymatic components: pyruvate dehydrogenase (E1), dihydrolipoamide acetyltransferase (E2) and lipoamide dehydrogenase (E3). Its function is as follows. The B.subtilis PDH complex also possesses branched-chain 2-oxoacid dehydrogenase (BCDH) activity. In Bacillus subtilis (strain 168), this protein is Pyruvate dehydrogenase E1 component subunit beta.